The chain runs to 434 residues: Fez family zinc finger protein 2 (434 aa).

The Engrailed homology 1 repressor signature appears at 27 to 42; it reads SLAFSIERIMAKTSEP. 6 C2H2-type zinc fingers span residues 253 to 275, 281 to 303, 309 to 331, 337 to 359, 365 to 387, and 393 to 416; these read FTCE…MPVH, FVCK…KIIH, HKCN…IRIH, FVCE…KLTH, YKCS…MHTH, and FTCA…RKLH.

Belongs to the krueppel C2H2-type zinc-finger protein family.

The protein resides in the nucleus. Transcription repressor. Component of the regulatory cascade that controls the development of dopaminergic (DA) and serotonergic (5HT) neurons. This Xenopus laevis (African clawed frog) protein is Fez family zinc finger protein 2 (fezf2).